A 437-amino-acid polypeptide reads, in one-letter code: MVSYVVALPEVMSAAATDVASIGSVVATASQGVAGATTTVLAAAEDEVSAAIAALFSGHGQDYQALSAQLAVFHERFVQALTGAAKGYAAAELANASLLQSEFASGIGNGFATIHQEIQRAPTALAAGFTQVPPFAAAQAGIFTGTPSGAAGFDIASLWPVKPLLSLSALETHFAIPNNPLLALIASDIPPLSWFLGNSPPPLLNSLLGQTVQYTTYDGMSVVQITPAHPTGEYVVAIHGGAFILPPSIFHWLNYSVTAYQTGATVQVPIYPLVQEGGTAGTVVPAMAGLISTQIAQHGVSNVSVVGDSAGGNLALAAAQYMVSQGNPVPSSMVLLSPWLDVGTWQISQAWAGNLAVNDPLVSPLYGSLNGLPPTYVYSGSLDPLAQQAVVLEHTAVVQGAPFSFVLAPWQIHDWILLTPWGLLSWPQINQQLGIAA.

One can recognise a PE domain in the interval 1-100 (MVSYVVALPE…AELANASLLQ (100 aa)). The linker stretch occupies residues 101–206 (SEFASGIGNG…GNSPPPLLNS (106 aa)). The lipase stretch occupies residues 207–437 (LLGQTVQYTT…QINQQLGIAA (231 aa)). The short motif at 239-241 (HGG) is the Involved in the stabilization of the negatively charged intermediate by the formation of the oxyanion hole element. Residues S309, D383, and H413 contribute to the active site.

In the N-terminal section; belongs to the mycobacterial PE family. PGRS subfamily. It in the C-terminal section; belongs to the 'GDXG' lipolytic enzyme family. As to quaternary structure, forms aggregates via its PE domain. In terms of processing, upon export, the PE domain is removed by proteolytic cleavage. Cleavage occurs at the cell surface and is not required for secretion. Cleaved after Gly-149 by the aspartic protease PecA. May also be cleaved before Leu-98 and after Ala-136.

Its subcellular location is the cytoplasm. The protein localises to the secreted. It is found in the cell wall. It localises to the cell surface. It carries out the reaction a triacylglycerol + H2O = a diacylglycerol + a fatty acid + H(+). The catalysed reaction is 1,2,3-tri-(9Z-octadecenoyl)-glycerol + H2O = di-(9Z)-octadecenoylglycerol + (9Z)-octadecenoate + H(+). The enzyme catalyses an acetyl ester + H2O = an aliphatic alcohol + acetate + H(+). It catalyses the reaction a butanoate ester + H2O = an aliphatic alcohol + butanoate + H(+). It carries out the reaction a hexanoate ester + H2O = an aliphatic alcohol + hexanoate + H(+). The catalysed reaction is an octanoate ester + H2O = an aliphatic alcohol + octanoate + H(+). The enzyme catalyses a dodecanoate ester + H2O = an aliphatic alcohol + dodecanoate + H(+). It catalyses the reaction a tetradecanoate ester + H2O = an aliphatic alcohol + tetradecanoate + H(+). It carries out the reaction hexadecanoate ester + H2O = an aliphatic alcohol + hexadecanoate + H(+). The catalysed reaction is octadecanoate ester + H2O = an aliphatic alcohol + octadecanoate + H(+). The enzyme catalyses 1-butyrylglycerol + H2O = butanoate + glycerol + H(+). It catalyses the reaction 1,2,3-tributanoylglycerol + H2O = dibutanoylglycerol + butanoate + H(+). Its activity is regulated as follows. PE domain down-regulates lipase activity. Cleavage by PecA does not affect surface localization and lipase activity. With respect to regulation, inhibited by diethyl-p-nitrophenyl phosphate (E-600) at 0.5 uM, by phenylmethanesulfonyl fluoride at 5 mM and by polyethylene glycol sorbitan monolaurate (Tween 20). Also inhibited by CaCl(2), CoCl(2), MnCl(2), ZnCl(2) and MgCl(2). Inhibited by several hydrazides compounds. Stimulated slightly by SDS at concentrations up to 2 mM, above which the activity is severely inhibited. Functionally, catalyzes the hydrolysis of both intracellular and extracellular triacylglycerol (TAG). In vitro, can also hydrolyze p-nitrophenyl (pNP) esters with various chain lengths, including pNP-acetate (C2), pNP-butyrate (C4), pNP-caproate (C6), pNP-caprylate (C8), pNP-laurate (C12), pNP-myristate (C14), pNP-palmitate (C16) and pNP-stearate (C18). Also hydrolyzes monobutyrin, tributyrin and trioctanoin. Overexpression results in increase of virulence characterized by reduced survival of infected mouse and increased burden of bacilli in the lungs. Hydrolyzes internal or host-derived TAG depending on its localization. Hydrolyzes TAG that accumulates within mycobacterial intracytosolic lipid inclusions (ILI). Probably responsible for the utilization of stored long-chain TAG during the dormancy and reactivation stages of the pathogen. In terms of biological role, hydrolyzes host-derived TAG. The chain is Triacylglycerol lipase from Mycobacterium tuberculosis (strain ATCC 25618 / H37Rv).